A 284-amino-acid polypeptide reads, in one-letter code: Nucleotide-binding protein NMCC_0698 (284 aa).

8–15 (GLSGSGKS) lines the ATP pocket. 58-61 (DVRS) contributes to the GTP binding site.

Belongs to the RapZ-like family.

Functionally, displays ATPase and GTPase activities. This chain is Nucleotide-binding protein NMCC_0698, found in Neisseria meningitidis serogroup C (strain 053442).